The primary structure comprises 456 residues: Chromosomal replication initiator protein DnaA (456 aa).

The tract at residues 1–83 (MKLKILHFTS…DAFEEESNNG (83 aa)) is domain I, interacts with DnaA modulators. Residues 83–116 (GVRPEIHIKVKEKKENVKSLKNNKSMLYFNTNGL) form a domain II region. A domain III, AAA+ region region spans residues 117 to 331 (SLNPFYTFEN…GILSTINAHI (215 aa)). Residues Gly161, Gly163, Lys164, and Thr165 each coordinate ATP. The segment at 332-456 (NLSPESSSLK…SKIQQSLDSV (125 aa)) is domain IV, binds dsDNA.

Belongs to the DnaA family. As to quaternary structure, oligomerizes as a right-handed, spiral filament on DNA at oriC.

The protein resides in the cytoplasm. In terms of biological role, plays an essential role in the initiation and regulation of chromosomal replication. ATP-DnaA binds to the origin of replication (oriC) to initiate formation of the DNA replication initiation complex once per cell cycle. Binds the DnaA box (a 9 base pair repeat at the origin) and separates the double-stranded (ds)DNA. Forms a right-handed helical filament on oriC DNA; dsDNA binds to the exterior of the filament while single-stranded (ss)DNA is stabiized in the filament's interior. The ATP-DnaA-oriC complex binds and stabilizes one strand of the AT-rich DNA unwinding element (DUE), permitting loading of DNA polymerase. After initiation quickly degrades to an ADP-DnaA complex that is not apt for DNA replication. Binds acidic phospholipids. The chain is Chromosomal replication initiator protein DnaA from Helicobacter hepaticus (strain ATCC 51449 / 3B1).